The following is a 508-amino-acid chain: 2-isopropylmalate synthase (508 aa).

The region spanning Ile5–Tyr267 is the Pyruvate carboxyltransferase domain. The Mn(2+) site is built by Asp14, His202, His204, and Asn238. A regulatory domain region spans residues Val390–Gln508.

The protein belongs to the alpha-IPM synthase/homocitrate synthase family. LeuA type 1 subfamily. Homodimer. Mn(2+) is required as a cofactor.

The protein resides in the cytoplasm. It catalyses the reaction 3-methyl-2-oxobutanoate + acetyl-CoA + H2O = (2S)-2-isopropylmalate + CoA + H(+). Its pathway is amino-acid biosynthesis; L-leucine biosynthesis; L-leucine from 3-methyl-2-oxobutanoate: step 1/4. Catalyzes the condensation of the acetyl group of acetyl-CoA with 3-methyl-2-oxobutanoate (2-ketoisovalerate) to form 3-carboxy-3-hydroxy-4-methylpentanoate (2-isopropylmalate). The protein is 2-isopropylmalate synthase of Ruminiclostridium cellulolyticum (strain ATCC 35319 / DSM 5812 / JCM 6584 / H10) (Clostridium cellulolyticum).